The sequence spans 509 residues: ATP synthase subunit alpha (509 aa).

ATP is bound at residue 169-176 (GDRQTGKT).

It belongs to the ATPase alpha/beta chains family. In terms of assembly, F-type ATPases have 2 components, CF(1) - the catalytic core - and CF(0) - the membrane proton channel. CF(1) has five subunits: alpha(3), beta(3), gamma(1), delta(1), epsilon(1). CF(0) has three main subunits: a(1), b(2) and c(9-12). The alpha and beta chains form an alternating ring which encloses part of the gamma chain. CF(1) is attached to CF(0) by a central stalk formed by the gamma and epsilon chains, while a peripheral stalk is formed by the delta and b chains.

Its subcellular location is the cell inner membrane. It catalyses the reaction ATP + H2O + 4 H(+)(in) = ADP + phosphate + 5 H(+)(out). In terms of biological role, produces ATP from ADP in the presence of a proton gradient across the membrane. The alpha chain is a regulatory subunit. This Agrobacterium fabrum (strain C58 / ATCC 33970) (Agrobacterium tumefaciens (strain C58)) protein is ATP synthase subunit alpha.